The primary structure comprises 160 residues: Nucleotide-binding protein BP2916 (160 aa).

The protein belongs to the YajQ family.

Nucleotide-binding protein. This chain is Nucleotide-binding protein BP2916, found in Bordetella pertussis (strain Tohama I / ATCC BAA-589 / NCTC 13251).